Reading from the N-terminus, the 444-residue chain is 23S rRNA (uracil(1939)-C(5))-methyltransferase RlmD (444 aa).

One can recognise a TRAM domain in the interval 5–67 (RSRIDRTPFQ…RHFDEARTVE (63 aa)). Residues Cys-80, Cys-86, Cys-89, and Cys-168 each contribute to the [4Fe-4S] cluster site. S-adenosyl-L-methionine contacts are provided by Gln-276, Phe-305, Asn-310, Glu-326, Asp-353, and Asp-374. Cys-400 acts as the Nucleophile in catalysis.

Belongs to the class I-like SAM-binding methyltransferase superfamily. RNA M5U methyltransferase family. RlmD subfamily.

It catalyses the reaction uridine(1939) in 23S rRNA + S-adenosyl-L-methionine = 5-methyluridine(1939) in 23S rRNA + S-adenosyl-L-homocysteine + H(+). Catalyzes the formation of 5-methyl-uridine at position 1939 (m5U1939) in 23S rRNA. This chain is 23S rRNA (uracil(1939)-C(5))-methyltransferase RlmD, found in Stenotrophomonas maltophilia (strain K279a).